The chain runs to 679 residues: Probable metal-nicotianamine transporter YSL18 (679 aa).

Positions 1–17 (MESVGDPRDGPSTERAF) are enriched in basic and acidic residues. Residues 1 to 21 (MESVGDPRDGPSTERAFEGQP) form a disordered region. Helical transmembrane passes span 29 to 49 (VTLR…SVMM), 51 to 71 (LVFT…LGFF), 101 to 121 (CVVA…LLAM), 144 to 164 (FGRM…AIVP), 211 to 231 (LASL…NCGF), 255 to 275 (VGIG…GSII), 309 to 329 (VFCA…AISL), 379 to 399 (FAIS…PLMY), 407 to 427 (VAAA…GTGV), 441 to 461 (ILMF…SLVI), 497 to 517 (VIGT…FHHF), 547 to 567 (LPKY…AVCA), 593 to 613 (FLLV…VFLW), and 627 to 647 (VLAS…ALLA).

Belongs to the YSL (TC 2.A.67.2) family.

It is found in the membrane. In terms of biological role, may be involved in the transport of nicotianamine-chelated metals. This chain is Probable metal-nicotianamine transporter YSL18 (YSL18), found in Oryza sativa subsp. japonica (Rice).